The sequence spans 206 residues: Small ribosomal subunit protein uS4 (206 aa).

Residues G96–K156 form the S4 RNA-binding domain.

It belongs to the universal ribosomal protein uS4 family. Part of the 30S ribosomal subunit. Contacts protein S5. The interaction surface between S4 and S5 is involved in control of translational fidelity.

One of the primary rRNA binding proteins, it binds directly to 16S rRNA where it nucleates assembly of the body of the 30S subunit. Its function is as follows. With S5 and S12 plays an important role in translational accuracy. In Escherichia fergusonii (strain ATCC 35469 / DSM 13698 / CCUG 18766 / IAM 14443 / JCM 21226 / LMG 7866 / NBRC 102419 / NCTC 12128 / CDC 0568-73), this protein is Small ribosomal subunit protein uS4.